The sequence spans 197 residues: MQPAALESLINALRVLPGVGPKSAARMAYHLLQRDRRGAETLAGALGHALTHLHHCRLCNNFSEAEVCEVCASTRRDRRQLAVVEMPADFNMMEATQSYNGLYFVLMGRLSPLDGIGPREIHLDRLINRALDGTVEEVILATNFTPEGEATAHTIGELLKARGLKVSRLARGVPVGGELEYVDSGTLAQAVRDRRAL.

Residues 56 to 71 (CRLCNNFSEAEVCEVC) form a C4-type zinc finger. A Toprim domain is found at 79-174 (RQLAVVEMPA…KVSRLARGVP (96 aa)).

It belongs to the RecR family.

Functionally, may play a role in DNA repair. It seems to be involved in an RecBC-independent recombinational process of DNA repair. It may act with RecF and RecO. In Thiobacillus denitrificans (strain ATCC 25259 / T1), this protein is Recombination protein RecR.